The following is a 1172-amino-acid chain: Protein diaphanous homolog 3 (1172 aa).

Positions 1-15 (MEKHRARALGRDSKA) are enriched in basic and acidic residues. Residues 1-36 (MEKHRARALGRDSKASRRKGLPSAPPAGPYELGEKR) are disordered. Positions 16–39 (SRRKGLPSAPPAGPYELGEKRPKL) match the Nuclear localization signal motif. Position 47 is a phosphothreonine (T47). S56 is subject to Phosphoserine. Residues 57–96 (IRIPKGSKKERPPLPQLKTVSGSSDYSSVSSETMENNPKS) form a disordered region. The span at 77-87 (SGSSDYSSVSS) shows a compositional bias: low complexity. The GBD/FH3 domain maps to 94-456 (PKSLSENEVL…QIVLHRDGID (363 aa)). S155 is subject to Phosphoserine. Residues 493 to 530 (CKKFEKECTDHQETQAQLQKKEAKINELQAELQAFKSQ) adopt a coiled-coil conformation. The interval 535-586 (PPGTKIPLQTSAKGEPGPSAFPPAPPALGAGVPPPPPPPPPPPPPLPGMAMP) is disordered. The 71-residue stretch at 541-611 (PLQTSAKGEP…GQNFIPLNLP (71 aa)) folds into the FH1 domain. The span at 553-581 (SAFPPAPPALGAGVPPPPPPPPPPPPPLP) shows a compositional bias: pro residues. The region spanning 616-1014 (PKKEFKPEIS…EKRARIAKER (399 aa)) is the FH2 domain. Positions 1037 to 1067 (DETGVMDSLLEALQSGAAFRDRRKRTPKLKD) constitute a DAD domain. Residues S1073 and S1158 each carry the phosphoserine modification. Positions 1163 to 1172 (EALLARLRAL) match the Nuclear export signal motif.

It belongs to the formin homology family. Diaphanous subfamily. Ubiquitinated. In terms of tissue distribution, expressed in testis. Present in Sertoli cells (at protein level).

The protein resides in the cytoplasm. The protein localises to the nucleus. Its function is as follows. Actin nucleation and elongation factor required for the assembly of F-actin structures, such as actin cables and stress fibers. Required for cytokinesis, stress fiber formation and transcriptional activation of the serum response factor. Binds to GTP-bound form of Rho and to profilin: acts in a Rho-dependent manner to recruit profilin to the membrane, where it promotes actin polymerization. DFR proteins couple Rho and Src tyrosine kinase during signaling and the regulation of actin dynamics. Also acts as an actin nucleation and elongation factor in the nucleus by promoting nuclear actin polymerization inside the nucleus to drive serum-dependent SRF-MRTFA activity. In Rattus norvegicus (Rat), this protein is Protein diaphanous homolog 3.